Here is a 328-residue protein sequence, read N- to C-terminus: uncharacterized protein (328 aa).

To the C-terminal of para-aminobenzoate synthase component I.

This is an uncharacterized protein from Haemophilus influenzae (strain ATCC 51907 / DSM 11121 / KW20 / Rd).